The chain runs to 433 residues: Ligand-dependent corepressor (433 aa).

Residues 1-147 (MQRMIQQFAA…GTREGFGHST (147 aa)) are disordered. Polar residues predominate over residues 13–34 (TSKTSSTQDPSQPNSTKNQSLP). The span at 36–48 (ASPVTTSPTAATT) shows a compositional bias: low complexity. Position 42 is a phosphoserine (Ser42). Positions 53-57 (LSKLL) match the Interaction with nuclear receptors motif. Ser63 bears the Phosphoserine mark. The segment covering 88–110 (KKSPCASSTSLSHSPGCSSTQGN) has biased composition (polar residues). Ser249 is subject to Phosphoserine. Lys254 participates in a covalent cross-link: Glycyl lysine isopeptide (Lys-Gly) (interchain with G-Cter in SUMO2). Residues 299–348 (QNRKSMLDAGPDSWGSDAEQSTSGQPYPTSDQEGDPGSKQPRKKRGRYRQ) are disordered. The segment covering 316 to 329 (AEQSTSGQPYPTSD) has biased composition (polar residues). Residues 339–345 (PRKKRGR) carry the Nuclear localization signal motif. The region spanning 340-392 (RKKRGRYRQYNSEILEEAISVVMSGKMSVSKAQSIYGIPHSTLEYKVKERLGT) is the HTH psq-type domain. The segment at residues 368–388 (VSKAQSIYGIPHSTLEYKVKE) is a DNA-binding region (H-T-H motif). Residues 393-412 (LKNPPKKKMKLMRSEGPDVS) form a disordered region. Lys414 is covalently cross-linked (Glycyl lysine isopeptide (Lys-Gly) (interchain with G-Cter in SUMO2)).

Interacts with ESR1 and ESR2 in the presence of estradiol. Interacts with CTBP1, HDAC3 and HDAC6. Component of a large corepressor complex that contains about 20 proteins, including CTBP1, CTBP2, HDAC1 and HDAC2. In terms of tissue distribution, detected in heart and kidney.

The protein resides in the nucleus. Functionally, repressor of ligand-dependent transcription activation by various nuclear repressors. Repressor of ligand-dependent transcription activation by ESR1, ESR2, NR3C1, PGR, RARA, RARB, RARG, RXRA and VDR. May act as transcription activator that binds DNA elements with the sequence 5'-CCCTATCGATCGATCTCTACCT-3'. The polypeptide is Ligand-dependent corepressor (Lcor) (Mus musculus (Mouse)).